Reading from the N-terminus, the 663-residue chain is Telomere length regulator taz1 (663 aa).

The interval 15–72 is disordered; it reads ENEGDQQFDKEVVQNSDSNIETGQISDSLTKAVEERAETESSSNLSNFTTSESESSKP. 2 stretches are compositionally biased toward polar residues: residues 27–43 and 54–67; these read VQNS…SDSL and ESSS…TSES. The residue at position 332 (serine 332) is a Phosphoserine. Disordered stretches follow at residues 389-412 and 471-554; these read GSTA…TFSE and RAKS…PYEG. Basic and acidic residues-rich tracts occupy residues 489-498 and 512-524; these read KRGDNLRREA and PPVR…ESRS. The region spanning 556–612 is the Myb-like domain; that stretch reads RTRRKWTDEEENELYEMISQHGCCWSKIIHIQKLENGPLKTFGPTQIKDKARLIKAR.

In terms of assembly, interacts with taf1 via the Myb domain, and ccq1.

The protein localises to the cytoplasm. It is found in the nucleus. The protein resides in the chromosome. It localises to the telomere. In terms of biological role, regulates telomere length and function. Required for the repression of telomere-adjacent gene expression and for normal meiosis or sporulation. It may be a negative regulator of the telomere-replicating enzyme, telomerase, or may protect against activation of telomerase-independent pathways of telomere elongation. It may be involved in the interactions between chromosomes and spindle proteins, disruption of these interactions would lead to defective meiosis. The sequence is that of Telomere length regulator taz1 (taz1) from Schizosaccharomyces pombe (strain 972 / ATCC 24843) (Fission yeast).